Here is a 331-residue protein sequence, read N- to C-terminus: Putative type II secretion system C-type protein YghF (331 aa).

A helical transmembrane segment spans residues 44-60 (MFWLMLLIISAKMAHSL).

The protein belongs to the GSP C family.

The protein localises to the cell inner membrane. In terms of biological role, involved in a type II secretion system (T2SS, formerly general secretion pathway, GSP) for the export of folded proteins across the outer membrane. This chain is Putative type II secretion system C-type protein YghF, found in Escherichia coli (strain K12).